A 572-amino-acid chain; its full sequence is Sulfate adenylyltransferase (572 aa).

The segment at 1 to 169 is N-terminal; that stretch reads MANTPHGGVL…IQAINKLNHY (169 aa). Residues 170–394 are catalytic; sequence DYVGLRYTPA…LRESHPPRAK (225 aa). Residue glutamine 197 participates in sulfate binding. ATP contacts are provided by residues 197 to 200 and 291 to 294; these read QTRN and GRDH. Catalysis depends on residues threonine 198, arginine 199, and asparagine 200. Arginine 199 contacts sulfate. Alanine 295 provides a ligand contact to sulfate. Methionine 333 lines the ATP pocket. Residues 395–572 are allosteric regulation domain; adenylyl-sulfate kinase-like; sequence QGFTIFLTGH…LLESQGFFGN (178 aa). Residues 434–437, arginine 451, 477–478, and lysine 515 contribute to the 3'-phosphoadenylyl sulfate site; these read ETVR and IA.

The protein in the N-terminal section; belongs to the sulfate adenylyltransferase family. This sequence in the C-terminal section; belongs to the APS kinase family. As to quaternary structure, homohexamer. Dimer of trimers.

It localises to the cytoplasm. It catalyses the reaction sulfate + ATP + H(+) = adenosine 5'-phosphosulfate + diphosphate. It participates in sulfur metabolism; hydrogen sulfide biosynthesis; sulfite from sulfate: step 1/3. Its activity is regulated as follows. Allosterically inhibited by 3'-phosphoadenosine 5'-phosphosulfate (PAPS). Its function is as follows. Catalyzes the first intracellular reaction of sulfate assimilation, forming adenosine-5'-phosphosulfate (APS) from inorganic sulfate and ATP. Plays an important role in sulfate activation as a component of the biosynthesis pathway of sulfur-containing amino acids. In Yarrowia lipolytica (strain CLIB 122 / E 150) (Yeast), this protein is Sulfate adenylyltransferase.